We begin with the raw amino-acid sequence, 1526 residues long: Ig-like and fibronectin type-III domain-containing protein 2 (1526 aa).

Positions 1 to 19 (MMRWRLAVLFLTLLASTTG) are cleaved as a signal peptide. The tract at residues 20 to 39 (DDTTTKASVSTTTKKGTDGP) is disordered. Over 20–1415 (DDTTTKASVS…RRSASKGSSS (1396 aa)) the chain is Extracellular. Positions 24 to 33 (TKASVSTTTK) are enriched in low complexity. Positions 39–170 (PHLTTDDEGF…ELLEFQVEVL (132 aa)) constitute an Ig-like C2-type 1 domain. Residues cysteine 61 and cysteine 154 are joined by a disulfide bond. Residues asparagine 87, asparagine 143, asparagine 158, asparagine 181, asparagine 414, asparagine 427, asparagine 475, asparagine 489, asparagine 533, asparagine 590, asparagine 617, and asparagine 662 are each glycosylated (N-linked (GlcNAc...) asparagine). The 92-residue stretch at 379–470 (APRGKRDVDF…VRNIASTNVH (92 aa)) folds into the Fibronectin type-III 1 domain. Positions 587–678 (APGNVTISEL…TAKLFSTLPT (92 aa)) constitute a Fibronectin type-III 2 domain. The WR1 domain occupies 682–724 (PLCTIGEPIYMNDGRVMICDAVNPCPNGFRCTGAGSDLSYCCP). Residues asparagine 754, asparagine 871, asparagine 906, asparagine 939, asparagine 979, asparagine 1004, and asparagine 1049 are each glycosylated (N-linked (GlcNAc...) asparagine). Fibronectin type-III domains are found at residues 827–914 (AVRN…TKPA) and 924–1020 (APEK…AQKD). The Ig-like C2-type 2 domain maps to 1116–1207 (ASVTMKKDKI…SRVEASSEVI (92 aa)). A disulfide bond links cysteine 1137 and cysteine 1190. Asparagine 1250 carries an N-linked (GlcNAc...) asparagine glycan. The 93-residue stretch at 1314 to 1406 (APSEVSNVRI…SAIPKDSEPR (93 aa)) folds into the Fibronectin type-III 5 domain. Residues 1416–1436 (AFWIVVILVVFGVLIAGLAVL) form a helical membrane-spanning segment. The Cytoplasmic portion of the chain corresponds to 1437-1526 (SKRRELPYPI…NGMRYAKLET (90 aa)). A disordered region spans residues 1485-1518 (SATTGTAAATQSEWQSANLEANSTTDNSHEYRNG). Polar residues predominate over residues 1495–1510 (QSEWQSANLEANSTTD).

It localises to the cell membrane. In Caenorhabditis elegans, this protein is Ig-like and fibronectin type-III domain-containing protein 2.